The primary structure comprises 646 residues: Beta-mannosyltransferase 6 (646 aa).

Residues 1 to 25 (MGNYKPSIKQYVVTVKAIKSSQFGR) are Cytoplasmic-facing. A helical membrane pass occupies residues 26–46 (LGICAVVLLFVLGYPFYFISN). At 47–646 (NPFDTSIRYQ…LTGGWLPSHN (600 aa)) the chain is on the extracellular side. 9 N-linked (GlcNAc...) asparagine glycosylation sites follow: asparagine 62, asparagine 81, asparagine 103, asparagine 117, asparagine 127, asparagine 132, asparagine 146, asparagine 334, and asparagine 393.

It belongs to the BMT family.

It is found in the membrane. Its function is as follows. Beta-mannosyltransferase involved in cell wall biosynthesis. Required for beta-1,2-mannose transfer on phospholipomannan. Required for pro-inflammatory response in macrophages through phospholipomannan-induced TNF-alpha production. The polypeptide is Beta-mannosyltransferase 6 (BMT6) (Candida albicans (strain SC5314 / ATCC MYA-2876) (Yeast)).